The following is a 248-amino-acid chain: Mitochondrial import inner membrane translocase subunit Tim21 (248 aa).

The transit peptide at 1–18 (MICTFLRAVQYTEKLHRS) directs the protein to the mitochondrion. A disordered region spans residues 67-98 (TQGPSPRKAKEDGSKQVSVHRSQRGGTAVPTS). A helical membrane pass occupies residues 108 to 128 (FTYLIVVLFGISITGGLFYTI).

Belongs to the TIM21 family. In terms of assembly, component of the TIM23 complex. Component of the MITRAC (mitochondrial translation regulation assembly intermediate of cytochrome c oxidase complex) complex, the core components of this complex being COA3/MITRAC12 and COX14. Interacts with COA3 and MT-CO1/COX1.

The protein localises to the mitochondrion membrane. In terms of biological role, participates in the translocation of transit peptide-containing proteins across the mitochondrial inner membrane. Also required for assembly of mitochondrial respiratory chain complex I and complex IV as component of the MITRAC (mitochondrial translation regulation assembly intermediate of cytochrome c oxidase complex) complex. Probably shuttles between the presequence translocase and respiratory-chain assembly intermediates in a process that promotes incorporation of early nuclear-encoded subunits into these complexes. This is Mitochondrial import inner membrane translocase subunit Tim21 (TIMM21) from Homo sapiens (Human).